A 645-amino-acid polypeptide reads, in one-letter code: Threonine--tRNA ligase (645 aa).

The TGS domain occupies 1–61; that stretch reads MPVITLPDGS…SDDAKLSIIT (61 aa). Positions 243–534 are catalytic; that stretch reads DHRKLGKKLD…LIEDTEGAFP (292 aa). Positions 334, 385, and 511 each coordinate Zn(2+).

This sequence belongs to the class-II aminoacyl-tRNA synthetase family. As to quaternary structure, homodimer. It depends on Zn(2+) as a cofactor.

It localises to the cytoplasm. The enzyme catalyses tRNA(Thr) + L-threonine + ATP = L-threonyl-tRNA(Thr) + AMP + diphosphate + H(+). Catalyzes the attachment of threonine to tRNA(Thr) in a two-step reaction: L-threonine is first activated by ATP to form Thr-AMP and then transferred to the acceptor end of tRNA(Thr). Also edits incorrectly charged L-seryl-tRNA(Thr). This is Threonine--tRNA ligase from Marinomonas sp. (strain MWYL1).